The following is a 242-amino-acid chain: Alpha-aspartyl dipeptidase (242 aa).

Catalysis depends on charge relay system residues serine 125, aspartate 140, and histidine 162.

It belongs to the peptidase S51 family.

The protein resides in the cytoplasm. It catalyses the reaction Dipeptidase E catalyzes the hydrolysis of dipeptides Asp-|-Xaa. It does not act on peptides with N-terminal Glu, Asn or Gln, nor does it cleave isoaspartyl peptides.. Hydrolyzes dipeptides containing N-terminal aspartate residues. In Xenopus laevis (African clawed frog), this protein is Alpha-aspartyl dipeptidase (aad-a).